Here is a 457-residue protein sequence, read N- to C-terminus: Protein N-terminal amidase (457 aa).

In terms of domain architecture, CN hydrolase spans 19–453; that stretch reads LKVLVIQLNP…EGAILREVQF (435 aa). Glu63 functions as the Proton acceptor in the catalytic mechanism. Lys136 acts as the Proton donor in catalysis. Cys187 (nucleophile) is an active-site residue.

This sequence belongs to the carbon-nitrogen hydrolase superfamily.

Its function is as follows. Deamidates N-terminal Asn and Gln. Component of a targeting complex in the N-end rule pathway. This is Protein N-terminal amidase (NTA1) from Saccharomyces cerevisiae (strain ATCC 204508 / S288c) (Baker's yeast).